A 305-amino-acid polypeptide reads, in one-letter code: Myb-like transcriptional regulator basR (305 aa).

Myb-like domains lie at Arg5–Phe59, Thr60–Leu110, and Asn111–Ser162. The segment at Pro175–Ser215 is disordered. Residues Gln198–Ser207 are compositionally biased toward polar residues.

The protein resides in the nucleus. Its function is as follows. Transcription regulator that acts as a central regulatory node for the integration of external bacterial signals leading to the regulation of secondary metabolite gene clusters such as orsellinic, lecanoric acid, cichorine, 2,4-dihydroxy-3-methyl-6-(2-oxopropyl)benzaldehyde (dba), emericellamide or microperfuranone clusters. The protein is Myb-like transcriptional regulator basR of Emericella nidulans (strain FGSC A4 / ATCC 38163 / CBS 112.46 / NRRL 194 / M139) (Aspergillus nidulans).